A 160-amino-acid chain; its full sequence is Serine-protein kinase RsbW (160 aa).

Belongs to the anti-sigma-factor family.

It carries out the reaction L-seryl-[protein] + ATP = O-phospho-L-seryl-[protein] + ADP + H(+). It catalyses the reaction L-threonyl-[protein] + ATP = O-phospho-L-threonyl-[protein] + ADP + H(+). Its function is as follows. Negative regulator of sigma-B activity. Phosphorylates and inactivates its specific antagonist protein, RsbV. Upon phosphorylation of RsbV, RsbW is released and binds to sigma-B, thereby blocking its ability to form an RNA polymerase holoenzyme (E-sigma-B). The chain is Serine-protein kinase RsbW from Bacillus thuringiensis (strain Al Hakam).